The sequence spans 137 residues: MLQPKRTKFRKMHKGRNTGLAHRGSTVAFGQIGLKSLTRGRMTARQIEAARRTITRKIKRGGKIWIRVFPDKPITNKPLEVRMGKGKGPVEYWVCEIKPGKILYELEGISEELAREALTLAAAKLPFKTTIVKRTIM.

It belongs to the universal ribosomal protein uL16 family. In terms of assembly, part of the 50S ribosomal subunit.

In terms of biological role, binds 23S rRNA and is also seen to make contacts with the A and possibly P site tRNAs. This chain is Large ribosomal subunit protein uL16, found in Psychrobacter cryohalolentis (strain ATCC BAA-1226 / DSM 17306 / VKM B-2378 / K5).